Consider the following 363-residue polypeptide: UDP-N-acetylglucosamine--N-acetylmuramyl-(pentapeptide) pyrophosphoryl-undecaprenol N-acetylglucosamine transferase (363 aa).

Residues 10–12, asparagine 124, serine 195, isoleucine 250, and glutamine 295 contribute to the UDP-N-acetyl-alpha-D-glucosamine site; that span reads TGG.

The protein belongs to the glycosyltransferase 28 family. MurG subfamily.

It localises to the cell membrane. It carries out the reaction Mur2Ac(oyl-L-Ala-gamma-D-Glu-L-Lys-D-Ala-D-Ala)-di-trans,octa-cis-undecaprenyl diphosphate + UDP-N-acetyl-alpha-D-glucosamine = beta-D-GlcNAc-(1-&gt;4)-Mur2Ac(oyl-L-Ala-gamma-D-Glu-L-Lys-D-Ala-D-Ala)-di-trans,octa-cis-undecaprenyl diphosphate + UDP + H(+). It participates in cell wall biogenesis; peptidoglycan biosynthesis. Its function is as follows. Cell wall formation. Catalyzes the transfer of a GlcNAc subunit on undecaprenyl-pyrophosphoryl-MurNAc-pentapeptide (lipid intermediate I) to form undecaprenyl-pyrophosphoryl-MurNAc-(pentapeptide)GlcNAc (lipid intermediate II). The chain is UDP-N-acetylglucosamine--N-acetylmuramyl-(pentapeptide) pyrophosphoryl-undecaprenol N-acetylglucosamine transferase from Lactiplantibacillus plantarum (strain ATCC BAA-793 / NCIMB 8826 / WCFS1) (Lactobacillus plantarum).